Reading from the N-terminus, the 526-residue chain is Tyrosine-protein kinase transforming protein Src (526 aa).

A compositionally biased stretch (basic residues) spans methionine 1–arginine 15. The disordered stretch occupies residues methionine 1–lysine 59. Glycine 2 carries the N-myristoyl glycine; by host lipid modification. Positions arginine 16–histidine 25 are enriched in basic and acidic residues. One can recognise an SH3 domain in the interval glycine 81–serine 142. The SH2 domain occupies tryptophan 148–cysteine 245. In terms of domain architecture, Protein kinase spans leucine 267–leucine 517. ATP contacts are provided by residues leucine 273–valine 281 and lysine 295. The active-site Proton acceptor is aspartate 386. At tyrosine 416 the chain carries Phosphotyrosine; by autocatalysis.

The protein belongs to the protein kinase superfamily. Tyr protein kinase family. SRC subfamily. In terms of assembly, homodimer. Post-translationally, the phosphorylated form is termed pp60v-src.

The catalysed reaction is L-tyrosyl-[protein] + ATP = O-phospho-L-tyrosyl-[protein] + ADP + H(+). Its function is as follows. This phosphoprotein, required for both the initiation and the maintenance of neoplastic transformation, is a protein kinase that catalyzes the phosphorylation of tyrosine residues in vitro. This is Tyrosine-protein kinase transforming protein Src (V-SRC) from Rous sarcoma virus subgroup E (strain Schmidt-Ruppin) (RSV-SR-E).